We begin with the raw amino-acid sequence, 120 residues long: Large ribosomal subunit protein uL18 (120 aa).

It belongs to the universal ribosomal protein uL18 family. As to quaternary structure, part of the 50S ribosomal subunit; part of the 5S rRNA/L5/L18/L25 subcomplex. Contacts the 5S and 23S rRNAs.

Functionally, this is one of the proteins that bind and probably mediate the attachment of the 5S RNA into the large ribosomal subunit, where it forms part of the central protuberance. The protein is Large ribosomal subunit protein uL18 of Chloroflexus aggregans (strain MD-66 / DSM 9485).